We begin with the raw amino-acid sequence, 328 residues long: Methionyl-tRNA formyltransferase (328 aa).

Residue 121–124 (SLLP) coordinates (6S)-5,6,7,8-tetrahydrofolate.

Belongs to the Fmt family.

It catalyses the reaction L-methionyl-tRNA(fMet) + (6R)-10-formyltetrahydrofolate = N-formyl-L-methionyl-tRNA(fMet) + (6S)-5,6,7,8-tetrahydrofolate + H(+). In terms of biological role, attaches a formyl group to the free amino group of methionyl-tRNA(fMet). The formyl group appears to play a dual role in the initiator identity of N-formylmethionyl-tRNA by promoting its recognition by IF2 and preventing the misappropriation of this tRNA by the elongation apparatus. The polypeptide is Methionyl-tRNA formyltransferase (Paraburkholderia xenovorans (strain LB400)).